The sequence spans 237 residues: Large ribosomal subunit protein uL1 (237 aa).

The protein belongs to the universal ribosomal protein uL1 family. As to quaternary structure, part of the 50S ribosomal subunit.

Its function is as follows. Binds directly to 23S rRNA. The L1 stalk is quite mobile in the ribosome, and is involved in E site tRNA release. Protein L1 is also a translational repressor protein, it controls the translation of the L11 operon by binding to its mRNA. In Dehalococcoides mccartyi (strain ATCC BAA-2266 / KCTC 15142 / 195) (Dehalococcoides ethenogenes (strain 195)), this protein is Large ribosomal subunit protein uL1.